Here is a 107-residue protein sequence, read N- to C-terminus: Ig kappa chain V-VI region J539 (107 aa).

The framework-1 stretch occupies residues 1–23 (EIVLTQSPAITAASLGQKVTITC). Residues C23 and C87 are joined by a disulfide bond. A complementarity-determining-1 region spans residues 24–33 (SASSSVSSLH). The interval 34–48 (WYQQKSGTSPKPWIY) is framework-2. Positions 49-55 (EISKLAS) are complementarity-determining-2. The tract at residues 56-87 (GVPARFSGSGSGTSYSLTINTMEAEDAAIYYC) is framework-3. The complementarity-determining-3 stretch occupies residues 88–96 (QQWTYPLIT). The segment at 97 to 106 (FGAGTKLELK) is framework-4.

The sequence is that of Ig kappa chain V-VI region J539 from Mus musculus (Mouse).